A 334-amino-acid polypeptide reads, in one-letter code: MGMKKSRPRRGSLAFSPRKRAKKLVPKIRSWPADKKVGLQAFPVYKAGTTHALLIENNPKSPNNGQEVFTPVTVLETPDVTVAGIRLYEKTTKGLQALTEVWAEQLDGDLGRKLTLVKKEEKKTADALDAVLEKATEVRAIVHTNPKTTGIPKKKPEVVEIRIGGSSVAERLAYAKEILGKTLAISDVFEAGEIIDTLAITKGKGFQGSVKRWGIKVQFGKHQRKGVGRHTGSIGPWRPRRVMWTVPLPGQMGFHQRTEYNKRILKLGSEGAEITPKGGFLNYGAVKNGYVVVKGTVQGPAKRLVVLRGSVRAAEDKFGLPEVAYISTESKQGN.

Residues Met1–Arg10 show a composition bias toward basic residues. The tract at residues Met1–Arg20 is disordered.

This sequence belongs to the universal ribosomal protein uL3 family. Part of the 50S ribosomal subunit. Forms a cluster with proteins L14 and L24e.

Functionally, one of the primary rRNA binding proteins, it binds directly near the 3'-end of the 23S rRNA, where it nucleates assembly of the 50S subunit. The chain is Large ribosomal subunit protein uL3 from Methanococcus maripaludis (strain C6 / ATCC BAA-1332).